We begin with the raw amino-acid sequence, 36 residues long: Lambda-hexatoxin-Hv1a (36 aa).

4 disulfides stabilise this stretch: Cys-3/Cys-17, Cys-10/Cys-22, Cys-13/Cys-14, and Cys-16/Cys-33.

This sequence belongs to the neurotoxin 11 (kappa toxin) family. In terms of tissue distribution, expressed by the venom gland.

The protein resides in the secreted. This excitatory toxin inhibits insect calcium-activated potassium (KCa) channels (Slo-type). The sequence is that of Lambda-hexatoxin-Hv1a from Hadronyche versuta (Blue mountains funnel-web spider).